The sequence spans 75 residues: Protein Tlp homolog (75 aa).

Residues 52-75 are disordered; it reads RREALDGMREEIKDEARDKKNGYM.

It belongs to the Tlp family.

The protein is Protein Tlp homolog of Clostridium botulinum (strain Okra / Type B1).